Consider the following 440-residue polypeptide: Protein arginine N-methyltransferase 2 (440 aa).

Residues 147 to 194 form a disordered region; that stretch reads LSSGSEDGDEEMEVQQDDDEEAPQLVSTEDVEPTVEEPKFIPPDAKEK. Residues 152–168 are compositionally biased toward acidic residues; that stretch reads EDGDEEMEVQQDDDEEA. Positions 182–194 are enriched in basic and acidic residues; the sequence is EEPKFIPPDAKEK. Residues 192-440 enclose the RMT2 domain; sequence KEKQVTSEEY…RYAVGTSNRL (249 aa). Residues Tyr-201, Met-230, 252-257, 273-275, 310-311, and Asp-330 contribute to the S-adenosyl-L-methionine site; these read FGMGIV, EAH, and WQ.

It belongs to the class I-like SAM-binding methyltransferase superfamily. RMT2 methyltransferase family. As to quaternary structure, monomer.

The protein resides in the cytoplasm. Its subcellular location is the nucleus. In terms of biological role, S-adenosyl-L-methionine-dependent protein-arginine N-methyltransferase that methylates the delta-nitrogen atom of arginine residues to form N5-methylarginine (type IV) in target proteins. Monomethylates ribosomal protein L12. The chain is Protein arginine N-methyltransferase 2 from Gibberella zeae (strain ATCC MYA-4620 / CBS 123657 / FGSC 9075 / NRRL 31084 / PH-1) (Wheat head blight fungus).